The sequence spans 31 residues: Photosystem II reaction center protein T (31 aa).

A helical transmembrane segment spans residues 3 to 23 (ALVYTFLLIGTLGIIFFAIFF).

Belongs to the PsbT family. As to quaternary structure, PSII is composed of 1 copy each of membrane proteins PsbA, PsbB, PsbC, PsbD, PsbE, PsbF, PsbH, PsbI, PsbJ, PsbK, PsbL, PsbM, PsbT, PsbY, PsbZ, Psb30/Ycf12, at least 3 peripheral proteins of the oxygen-evolving complex and a large number of cofactors. It forms dimeric complexes.

The protein resides in the plastid. The protein localises to the chloroplast thylakoid membrane. Found at the monomer-monomer interface of the photosystem II (PS II) dimer, plays a role in assembly and dimerization of PSII. PSII is a light-driven water plastoquinone oxidoreductase, using light energy to abstract electrons from H(2)O, generating a proton gradient subsequently used for ATP formation. The polypeptide is Photosystem II reaction center protein T (Tetradesmus obliquus (Green alga)).